The sequence spans 118 residues: Cell division protein FtsB (118 aa).

At 1-6 the chain is on the cytoplasmic side; sequence MRNWRW. Residues 7-24 form a helical membrane-spanning segment; sequence LLLVLAALLAWLQHRFWF. At 25-118 the chain is on the periplasmic side; sequence GPGNSGEVRM…DLSQPRREKR (94 aa). Positions 30–66 form a coiled coil; sequence GEVRMLQVQIVQQHQENERLRQRNASLAAEVKNLKDG. Residues 98–118 are disordered; sequence LPNDTSADHGVDLSQPRREKR. Basic and acidic residues predominate over residues 103–118; the sequence is SADHGVDLSQPRREKR.

Belongs to the FtsB family. As to quaternary structure, part of a complex composed of FtsB, FtsL and FtsQ.

Its subcellular location is the cell inner membrane. Functionally, essential cell division protein. May link together the upstream cell division proteins, which are predominantly cytoplasmic, with the downstream cell division proteins, which are predominantly periplasmic. The polypeptide is Cell division protein FtsB (Xylella fastidiosa (strain M23)).